The following is a 40-amino-acid chain: Photosystem II reaction center protein J (40 aa).

A helical membrane pass occupies residues 8 to 28; sequence IPLWLIGTVAGIAVIGLVGVF.

This sequence belongs to the PsbJ family. In terms of assembly, PSII is composed of 1 copy each of membrane proteins PsbA, PsbB, PsbC, PsbD, PsbE, PsbF, PsbH, PsbI, PsbJ, PsbK, PsbL, PsbM, PsbT, PsbX, PsbY, PsbZ, Psb30/Ycf12, at least 3 peripheral proteins of the oxygen-evolving complex and a large number of cofactors. It forms dimeric complexes.

It localises to the plastid. Its subcellular location is the chloroplast thylakoid membrane. Its function is as follows. One of the components of the core complex of photosystem II (PSII). PSII is a light-driven water:plastoquinone oxidoreductase that uses light energy to abstract electrons from H(2)O, generating O(2) and a proton gradient subsequently used for ATP formation. It consists of a core antenna complex that captures photons, and an electron transfer chain that converts photonic excitation into a charge separation. This is Photosystem II reaction center protein J from Secale cereale (Rye).